A 360-amino-acid polypeptide reads, in one-letter code: MTVSKYNGVASTFNGVARRFDFAPLEADKLNWYPRSALPPEIPAIDLNKVNTEEELAQFLVDIRKSGLFYIVDHGIPEEISIGCYNAFREFCNLPEEAREKYNTDESFKSGGYVPFKGTSIGGGNLFERQKDFVVKFFWRGPSVVNRSPNDRFAEFHDEHHRKTAELAEKIITTILKALKTRFPEFHPDELKDNINVRNMFFSNRIYPEAPPDDGEKADYRLVPHRDLSFITLANQVPANNGFKGLFILTGDGEKIPVPPIRNSYLVFIGQGLSYLTNKYLPAALHGVDFPDNTNFEGSERASLISFYEPNDYMMPSKNINPLPEEIFEKSCTFYDDVGVGRAGTTYNYVRYKFHEGYYL.

Residues 200–310 (MFFSNRIYPE…RASLISFYEP (111 aa)) form the Fe2OG dioxygenase domain. Fe cation is bound by residues His-225, Asp-227, and His-286. Arg-301 contributes to the 2-oxoglutarate binding site.

The protein belongs to the iron/ascorbate-dependent oxidoreductase family. Fe(2+) is required as a cofactor.

It carries out the reaction prekainate + 2-oxoglutarate + O2 = kainate + succinate + CO2 + H2O. The catalysed reaction is prekainate + 2-oxoglutarate + O2 + H(+) = kainate lactone + succinate + CO2 + H2O. Its pathway is secondary metabolite biosynthesis. With respect to regulation, inhibited by the iron chelator EDTA. Its function is as follows. Iron/ascorbate-dependent oxidoreductase: part of the gene cluster that mediates the biosynthesis of kainic acid (KA) and derivatives, natural products with neurochemical activity acting as ionotropic glutamate receptor (iGluR) agonists, thus being neurotoxins. Catalyzes the conversion of prekainic acid to kainic acid and kainic acid lactone. In Digenea simplex (Marine red alga), this protein is Alpha-ketoglutarate dependent kainoid synthase.